A 215-amino-acid chain; its full sequence is Intraflagellar transport protein 43 homolog B (215 aa).

Residues methionine 1–isoleucine 107 are disordered.

Belongs to the IFT43 family. In terms of assembly, component of IFT complex A.

In terms of biological role, component of IFT complex A (IFT-A) involved in retrograde ciliary transport along microtubules from the ciliary tip to the base. This Salmo salar (Atlantic salmon) protein is Intraflagellar transport protein 43 homolog B (ift43b).